We begin with the raw amino-acid sequence, 103 residues long: Large ribosomal subunit protein bL21 (103 aa).

This sequence belongs to the bacterial ribosomal protein bL21 family. As to quaternary structure, part of the 50S ribosomal subunit. Contacts protein L20.

This protein binds to 23S rRNA in the presence of protein L20. In Mannheimia succiniciproducens (strain KCTC 0769BP / MBEL55E), this protein is Large ribosomal subunit protein bL21.